The following is a 122-amino-acid chain: Spermidine export protein MdtJ (122 aa).

Transmembrane regions (helical) follow at residues 1–21, 31–51, 54–74, and 81–101; these read MIYWIFLGLAIATEIIGTLSM, TGHIVMYVMITASYVMLSMAV, VALGVAYALWEGIGILFITLF, and EPISALKVLGLVTLIVGIMLV.

The protein belongs to the drug/metabolite transporter (DMT) superfamily. Small multidrug resistance (SMR) (TC 2.A.7.1) family. MdtJ subfamily. As to quaternary structure, forms a complex with MdtI.

It localises to the cell inner membrane. Catalyzes the excretion of spermidine. This is Spermidine export protein MdtJ from Serratia proteamaculans (strain 568).